The sequence spans 435 residues: Serine hydroxymethyltransferase (435 aa).

(6S)-5,6,7,8-tetrahydrofolate is bound by residues leucine 133 and 137–139 (GHL). Lysine 242 carries the post-translational modification N6-(pyridoxal phosphate)lysine.

Belongs to the SHMT family. As to quaternary structure, homodimer. Pyridoxal 5'-phosphate is required as a cofactor.

It localises to the cytoplasm. The enzyme catalyses (6R)-5,10-methylene-5,6,7,8-tetrahydrofolate + glycine + H2O = (6S)-5,6,7,8-tetrahydrofolate + L-serine. The protein operates within one-carbon metabolism; tetrahydrofolate interconversion. It participates in amino-acid biosynthesis; glycine biosynthesis; glycine from L-serine: step 1/1. Catalyzes the reversible interconversion of serine and glycine with tetrahydrofolate (THF) serving as the one-carbon carrier. This reaction serves as the major source of one-carbon groups required for the biosynthesis of purines, thymidylate, methionine, and other important biomolecules. Also exhibits THF-independent aldolase activity toward beta-hydroxyamino acids, producing glycine and aldehydes, via a retro-aldol mechanism. In Hyphomonas neptunium (strain ATCC 15444), this protein is Serine hydroxymethyltransferase.